A 465-amino-acid polypeptide reads, in one-letter code: Probable Xaa-Pro aminopeptidase pepP (465 aa).

4 residues coordinate Mn(2+): Asp-263, Asp-274, Glu-397, and Glu-437.

It belongs to the peptidase M24B family. The cofactor is Mn(2+).

The catalysed reaction is Release of any N-terminal amino acid, including proline, that is linked to proline, even from a dipeptide or tripeptide.. Functionally, catalyzes the removal of a penultimate prolyl residue from the N-termini of peptides. The chain is Probable Xaa-Pro aminopeptidase pepP (pepP) from Emericella nidulans (strain FGSC A4 / ATCC 38163 / CBS 112.46 / NRRL 194 / M139) (Aspergillus nidulans).